A 375-amino-acid polypeptide reads, in one-letter code: Peptide-N(4)-(N-acetyl-beta-glucosaminyl)asparagine amidase (375 aa).

Zn(2+) is bound by residues cysteine 129, cysteine 132, cysteine 163, and cysteine 166. Cysteine 189 (nucleophile) is an active-site residue. Residues histidine 219 and aspartate 236 contribute to the active site. Glutamate 239 provides a ligand contact to substrate. The tract at residues 345–375 (KIEVSRTHNIPTGRQTGDAEWTKSRGEDGNE) is disordered. The span at 364-375 (EWTKSRGEDGNE) shows a compositional bias: basic and acidic residues.

The protein belongs to the transglutaminase-like superfamily. PNGase family. Zn(2+) is required as a cofactor.

The protein localises to the cytoplasm. It catalyses the reaction Hydrolysis of an N(4)-(acetyl-beta-D-glucosaminyl)asparagine residue in which the glucosamine residue may be further glycosylated, to yield a (substituted) N-acetyl-beta-D-glucosaminylamine and a peptide containing an aspartate residue.. Its function is as follows. Specifically deglycosylates the denatured form of N-linked glycoproteins in the cytoplasm and assists their proteasome-mediated degradation. Cleaves the beta-aspartyl-glucosamine (GlcNAc) of the glycan and the amide side chain of Asn, converting Asn to Asp. Prefers proteins containing high-mannose over those bearing complex type oligosaccharides. Can recognize misfolded proteins in the endoplasmic reticulum that are exported to the cytosol to be destroyed and deglycosylate them, while it has no activity toward native proteins. Deglycosylation is a prerequisite for subsequent proteasome-mediated degradation of some, but not all, misfolded glycoproteins. The polypeptide is Peptide-N(4)-(N-acetyl-beta-glucosaminyl)asparagine amidase (PNG1) (Debaryomyces hansenii (strain ATCC 36239 / CBS 767 / BCRC 21394 / JCM 1990 / NBRC 0083 / IGC 2968) (Yeast)).